The chain runs to 363 residues: Succinyl-diaminopimelate desuccinylase (363 aa).

Histidine 63 lines the Zn(2+) pocket. Residue aspartate 65 is part of the active site. A Zn(2+)-binding site is contributed by aspartate 94. Glutamate 123 functions as the Proton acceptor in the catalytic mechanism. Positions 124, 152, and 337 each coordinate Zn(2+).

Belongs to the peptidase M20A family. DapE subfamily. In terms of assembly, homodimer. Requires Zn(2+) as cofactor. The cofactor is Co(2+).

It carries out the reaction N-succinyl-(2S,6S)-2,6-diaminopimelate + H2O = (2S,6S)-2,6-diaminopimelate + succinate. It functions in the pathway amino-acid biosynthesis; L-lysine biosynthesis via DAP pathway; LL-2,6-diaminopimelate from (S)-tetrahydrodipicolinate (succinylase route): step 3/3. In terms of biological role, catalyzes the hydrolysis of N-succinyl-L,L-diaminopimelic acid (SDAP), forming succinate and LL-2,6-diaminopimelate (DAP), an intermediate involved in the bacterial biosynthesis of lysine and meso-diaminopimelic acid, an essential component of bacterial cell walls. The sequence is that of Succinyl-diaminopimelate desuccinylase from Campylobacter concisus (strain 13826).